The primary structure comprises 412 residues: Putative odorant receptor 85d (412 aa).

The Cytoplasmic portion of the chain corresponds to 1–56; that stretch reads MLTKKDTQSAKEQEKLKAIPLHSFLKYANVFYLSIGMMAYDHKYSQKWKEVLLHWT. A helical transmembrane segment spans residues 57-77; the sequence is FIAQMVNLNTVLISELIYVFL. Over 78-84 the chain is Extracellular; that stretch reads AIGKGSN. Residues 85 to 105 form a helical membrane-spanning segment; the sequence is FLEATMNLSFIGFVIVGDFKI. At 106–152 the chain is on the cytoplasmic side; the sequence is WNISRQRKRLTQVVSRLEELHPQGLAQQEPYNIGHHLSGYSRYSKFY. The chain crosses the membrane as a helical span at residues 153 to 173; the sequence is FGMHMVLIWTYNLYWAVYYLV. At 174–219 the chain is on the extracellular side; it reads CDFWLGMRQFERMLPYYCWVPWDWSTGYSYYFMYISQNIGGQACLS. Residues 220–240 form a helical membrane-spanning segment; that stretch reads GQLAADMLMCALVTLVVMHFI. Topologically, residues 241-282 are cytoplasmic; the sequence is RLSAHIESHVAGIGSFQHDLEFLQATVAYHQSLIHLCQDINE. The chain crosses the membrane as a helical span at residues 283-303; sequence IFGVSLLSNFVSSSFIICFVG. Topologically, residues 304–314 are extracellular; the sequence is FQMTIGSKIDN. Residues 315–335 traverse the membrane as a helical segment; that stretch reads LVMLVLFLFCAMVQVFMIATH. Over 336–382 the chain is Cytoplasmic; it reads AQRLVDASEQIGQAVYNHDWFRADLRYRKMLILIIKRAQQPSRLKAT. A helical membrane pass occupies residues 383–403; it reads MFLNISLVTVSDLLQLSYKFF. Residues 404 to 412 lie on the Extracellular side of the membrane; the sequence is ALLRTMYVN.

The protein belongs to the insect chemoreceptor superfamily. Heteromeric odorant receptor channel (TC 1.A.69) family. Or49a subfamily. Interacts with Orco. Complexes exist early in the endomembrane system in olfactory sensory neurons (OSNs), coupling these complexes to the conserved ciliary trafficking pathway. Expressed in olfactory sensory neurons in the maxillary palp.

The protein localises to the cell membrane. Its function is as follows. Odorant receptor which mediates acceptance or avoidance behavior, depending on its substrates. The odorant receptor repertoire encodes a large collection of odor stimuli that vary widely in identity, intensity, and duration. May form a complex with Orco to form odorant-sensing units, providing sensitive and prolonged odorant signaling and calcium permeability. This chain is Putative odorant receptor 85d (Or85d), found in Drosophila melanogaster (Fruit fly).